Reading from the N-terminus, the 70-residue chain is Small ribosomal subunit protein bS21 (70 aa).

The segment covering 48–61 (KLAAAVKRQSKRLR) has biased composition (basic residues). The segment at 48-70 (KLAAAVKRQSKRLRSQQLPPKMY) is disordered.

Belongs to the bacterial ribosomal protein bS21 family.

This chain is Small ribosomal subunit protein bS21, found in Thiobacillus denitrificans (strain ATCC 25259 / T1).